We begin with the raw amino-acid sequence, 359 residues long: Protein Wnt-2 (359 aa).

A signal peptide spans Met-1–Ser-25. 11 disulfide bridges follow: Cys-75-Cys-86, Cys-126-Cys-134, Cys-136-Cys-156, Cys-205-Cys-219, Cys-207-Cys-214, Cys-277-Cys-308, Cys-293-Cys-303, Cys-307-Cys-347, Cys-323-Cys-338, Cys-325-Cys-335, and Cys-330-Cys-331. Residue Ser-211 is the site of O-palmitoleoyl serine; by PORCN attachment. An N-linked (GlcNAc...) asparagine glycan is attached at Asn-294.

This sequence belongs to the Wnt family. In terms of processing, palmitoleoylation is required for efficient binding to frizzled receptors. Depalmitoleoylation leads to Wnt signaling pathway inhibition.

The protein resides in the secreted. Its subcellular location is the extracellular space. The protein localises to the extracellular matrix. Ligand for members of the frizzled family of seven transmembrane receptors. Probable developmental protein. May be a signaling molecule which affects the development of discrete regions of tissues. Is likely to signal over only few cell diameters. The sequence is that of Protein Wnt-2 (WNT2) from Echinops telfairi (Lesser hedgehog tenrec).